The primary structure comprises 246 residues: Large ribosomal subunit protein uL2 (246 aa).

The segment at 197 to 226 (SPYAHPHGGGSHPKGGTPVPKTAPPGQKVG) is disordered.

It belongs to the universal ribosomal protein uL2 family. In terms of assembly, part of the 50S ribosomal subunit. Forms a bridge to the 30S subunit in the 70S ribosome.

One of the primary rRNA binding proteins. Required for association of the 30S and 50S subunits to form the 70S ribosome, for tRNA binding and peptide bond formation. It has been suggested to have peptidyltransferase activity; this is somewhat controversial. Makes several contacts with the 16S rRNA in the 70S ribosome. In Pyrobaculum islandicum (strain DSM 4184 / JCM 9189 / GEO3), this protein is Large ribosomal subunit protein uL2.